A 599-amino-acid chain; its full sequence is Protein ref(2)P (599 aa).

One can recognise a PB1 domain in the interval 3 to 88 (EKLLKITYQG…CESNMHVQVA (86 aa)). The ZZ-type zinc-finger motif lies at 122 to 173 (HDSVQCDGCGLAPLIGFRYKCVQCSNFDLCQKCESAHKHPEHLMLRMPTNNG). Zn(2+) is bound by residues Cys127, Cys130, Cys142, Cys145, Cys151, Cys154, His160, and His163. Disordered stretches follow at residues 192 to 225 (RRSR…HARR), 245 to 319 (TTAT…INLD), 357 to 453 (GIFA…LDPE), and 507 to 544 (ASAN…DDKR). Positions 199–211 (PFQEASQPAPAAE) are enriched in low complexity. Residues 276-286 (KATESEAKPTE) show a composition bias toward basic and acidic residues. Residues 291–319 (NTDQSVPTTEDPVTTPRSTEPTTPVINLD) show a composition bias toward polar residues. The segment covering 375–411 (QSQSSGQSAASSASQSAVPSAAPSANQSNVPSANQSA) has biased composition (low complexity). Tandem repeats lie at residues 386 to 393 (SASQSAVP), 399 to 406 (ANQSNVPS), and 407 to 413 (ANQSATP). The 3 X 8 AA repeats of S-A-N-Q-S-X-X-P stretch occupies residues 386 to 413 (SASQSAVPSAAPSANQSNVPSANQSATP). Residues 412 to 423 (TPSISGSISDAQ) show a composition bias toward polar residues. Residues 511-536 (TQTAQVDTVSTSTSTTSVTTNSVGTS) show a composition bias toward low complexity. Residues 550-595 (HTDERINQSIHAMMAMGFSNEGAWLTQLLESVQGNIPAALDVMHVS) form the UBA domain.

In terms of assembly, interacts with aPKC and Traf6.

The protein resides in the nucleus. It is found in the cytoplasm. Its function is as follows. Required for selective autophagy activation by ubiquitinated proteins. Implicated in sigma rhabdovirus multiplication and necessary for male fertility. Involved in activating transcription of Drs. The polypeptide is Protein ref(2)P (ref(2)P) (Drosophila simulans (Fruit fly)).